Reading from the N-terminus, the 115-residue chain is U3-lycotoxin-Ls1e (115 aa).

The signal sequence occupies residues 1–20 (MKFVLLFGVLSLTLFSYSSA). The propeptide occupies 21–44 (EMLDDFDQADEDELLSLIEKEEAR). 4 disulfide bridges follow: Cys48–Cys63, Cys55–Cys72, Cys62–Cys87, and Cys74–Cys85.

This sequence belongs to the neurotoxin 19 (CSTX) family. 01 subfamily. Expressed by the venom gland.

The protein localises to the secreted. The polypeptide is U3-lycotoxin-Ls1e (Lycosa singoriensis (Wolf spider)).